A 427-amino-acid chain; its full sequence is 3-phosphoshikimate 1-carboxyvinyltransferase (427 aa).

Residues lysine 20, serine 21, and arginine 25 each contribute to the 3-phosphoshikimate site. Residue lysine 20 participates in phosphoenolpyruvate binding. Phosphoenolpyruvate is bound by residues glycine 92 and arginine 120. 3-phosphoshikimate contacts are provided by serine 166, glutamine 168, aspartate 312, and lysine 339. Glutamine 168 serves as a coordination point for phosphoenolpyruvate. The active-site Proton acceptor is aspartate 312. 2 residues coordinate phosphoenolpyruvate: arginine 343 and arginine 385.

It belongs to the EPSP synthase family. In terms of assembly, monomer.

It localises to the cytoplasm. The catalysed reaction is 3-phosphoshikimate + phosphoenolpyruvate = 5-O-(1-carboxyvinyl)-3-phosphoshikimate + phosphate. Its pathway is metabolic intermediate biosynthesis; chorismate biosynthesis; chorismate from D-erythrose 4-phosphate and phosphoenolpyruvate: step 6/7. In terms of biological role, catalyzes the transfer of the enolpyruvyl moiety of phosphoenolpyruvate (PEP) to the 5-hydroxyl of shikimate-3-phosphate (S3P) to produce enolpyruvyl shikimate-3-phosphate and inorganic phosphate. The sequence is that of 3-phosphoshikimate 1-carboxyvinyltransferase from Streptococcus gordonii (strain Challis / ATCC 35105 / BCRC 15272 / CH1 / DL1 / V288).